The chain runs to 218 residues: Peptide methionine sulfoxide reductase MsrA (218 aa).

Cysteine 57 is an active-site residue.

This sequence belongs to the MsrA Met sulfoxide reductase family.

The catalysed reaction is L-methionyl-[protein] + [thioredoxin]-disulfide + H2O = L-methionyl-(S)-S-oxide-[protein] + [thioredoxin]-dithiol. It catalyses the reaction [thioredoxin]-disulfide + L-methionine + H2O = L-methionine (S)-S-oxide + [thioredoxin]-dithiol. Has an important function as a repair enzyme for proteins that have been inactivated by oxidation. Catalyzes the reversible oxidation-reduction of methionine sulfoxide in proteins to methionine. The chain is Peptide methionine sulfoxide reductase MsrA from Brucella abortus (strain S19).